The primary structure comprises 225 residues: Ribonuclease 3 (225 aa).

One can recognise an RNase III domain in the interval 5 to 127; sequence LDRLQRSLGH…VFAATFLDQG (123 aa). Position 40 (Glu40) interacts with Mg(2+). Asp44 is a catalytic residue. Mg(2+) is bound by residues Asp113 and Glu116. Residue Glu116 is part of the active site. The 71-residue stretch at 154–224 folds into the DRBM domain; sequence DPKTALQELL…AELALAQLRK (71 aa).

It belongs to the ribonuclease III family. In terms of assembly, homodimer. Requires Mg(2+) as cofactor.

It is found in the cytoplasm. The enzyme catalyses Endonucleolytic cleavage to 5'-phosphomonoester.. Its function is as follows. Digests double-stranded RNA. Involved in the processing of primary rRNA transcript to yield the immediate precursors to the large and small rRNAs (23S and 16S). Processes some mRNAs, and tRNAs when they are encoded in the rRNA operon. Processes pre-crRNA and tracrRNA of type II CRISPR loci if present in the organism. The protein is Ribonuclease 3 of Aromatoleum aromaticum (strain DSM 19018 / LMG 30748 / EbN1) (Azoarcus sp. (strain EbN1)).